A 145-amino-acid chain; its full sequence is Superoxide dismutase [Mn/Fe] (145 aa).

Positions 10 and 64 each coordinate Fe(3+). H10 and H64 together coordinate Mn(2+).

It belongs to the iron/manganese superoxide dismutase family. The cofactor is Mn(2+). Requires Fe(3+) as cofactor.

It carries out the reaction 2 superoxide + 2 H(+) = H2O2 + O2. Destroys superoxide anion radicals which are normally produced within the cells and which are toxic to biological systems. Catalyzes the dismutation of superoxide anion radicals into O2 and H2O2 by successive reduction and oxidation of the transition metal ion at the active site. The chain is Superoxide dismutase [Mn/Fe] (sodA) from Streptococcus salivarius.